Consider the following 313-residue polypeptide: Protoheme IX farnesyltransferase (313 aa).

Transmembrane regions (helical) follow at residues 33 to 53 (IALM…PVML), 59 to 79 (MPSW…AGSA), 107 to 127 (VEPA…TLMF), 129 to 149 (LLVN…YVFV), 162 to 182 (IVIG…AVTG), 188 to 208 (AVLL…ALAI), 212 to 232 (DDYA…EVVT), 252 to 272 (VADI…WFVA), and 292 to 312 (LFHM…AAAL).

Belongs to the UbiA prenyltransferase family. Protoheme IX farnesyltransferase subfamily.

The protein resides in the cell membrane. It carries out the reaction heme b + (2E,6E)-farnesyl diphosphate + H2O = Fe(II)-heme o + diphosphate. It participates in porphyrin-containing compound metabolism; heme O biosynthesis; heme O from protoheme: step 1/1. Functionally, converts heme B (protoheme IX) to heme O by substitution of the vinyl group on carbon 2 of heme B porphyrin ring with a hydroxyethyl farnesyl side group. The polypeptide is Protoheme IX farnesyltransferase (Parafrankia sp. (strain EAN1pec)).